The chain runs to 81 residues: D-alanyl carrier protein (81 aa).

Residues 1-81 (MADEAIKNGV…KIIAKVEQAQ (81 aa)) form the Carrier domain. Position 39 is an O-(pantetheine 4'-phosphoryl)serine (S39).

This sequence belongs to the DltC family. 4'-phosphopantetheine is transferred from CoA to a specific serine of apo-DCP.

It localises to the cytoplasm. It functions in the pathway cell wall biogenesis; lipoteichoic acid biosynthesis. Its function is as follows. Carrier protein involved in the D-alanylation of lipoteichoic acid (LTA). The loading of thioester-linked D-alanine onto DltC is catalyzed by D-alanine--D-alanyl carrier protein ligase DltA. The DltC-carried D-alanyl group is further transferred to cell membrane phosphatidylglycerol (PG) by forming an ester bond, probably catalyzed by DltD. D-alanylation of LTA plays an important role in modulating the properties of the cell wall in Gram-positive bacteria, influencing the net charge of the cell wall. This is D-alanyl carrier protein from Lacticaseibacillus casei (strain BL23) (Lactobacillus casei).